The primary structure comprises 457 residues: ATP synthase subunit beta (457 aa).

Position 147-154 (147-154 (GGAGVGKT)) interacts with ATP.

The protein belongs to the ATPase alpha/beta chains family. F-type ATPases have 2 components, CF(1) - the catalytic core - and CF(0) - the membrane proton channel. CF(1) has five subunits: alpha(3), beta(3), gamma(1), delta(1), epsilon(1). CF(0) has three main subunits: a(1), b(2) and c(9-12). The alpha and beta chains form an alternating ring which encloses part of the gamma chain. CF(1) is attached to CF(0) by a central stalk formed by the gamma and epsilon chains, while a peripheral stalk is formed by the delta and b chains.

Its subcellular location is the cell inner membrane. The enzyme catalyses ATP + H2O + 4 H(+)(in) = ADP + phosphate + 5 H(+)(out). Functionally, produces ATP from ADP in the presence of a proton gradient across the membrane. The catalytic sites are hosted primarily by the beta subunits. The protein is ATP synthase subunit beta of Pasteurella multocida (strain Pm70).